The following is a 224-amino-acid chain: Ribonuclease T (224 aa).

The region spanning valine 32–phenylalanine 206 is the Exonuclease domain. Positions 35, 37, 193, and 198 each coordinate Mg(2+). Catalysis depends on histidine 193, which acts as the Proton donor/acceptor.

This sequence belongs to the RNase T family. As to quaternary structure, homodimer. Requires Mg(2+) as cofactor.

In terms of biological role, trims short 3' overhangs of a variety of RNA species, leaving a one or two nucleotide 3' overhang. Responsible for the end-turnover of tRNA: specifically removes the terminal AMP residue from uncharged tRNA (tRNA-C-C-A). Also appears to be involved in tRNA biosynthesis. This is Ribonuclease T from Pseudomonas fluorescens (strain Pf0-1).